A 292-amino-acid polypeptide reads, in one-letter code: Small ribosomal subunit biogenesis GTPase RsgA (292 aa).

Residues Lys62–Leu213 enclose the CP-type G domain. GTP contacts are provided by residues Ser111 to Asp114 and Gly156 to Thr164. Positions 237, 242, 244, and 250 each coordinate Zn(2+).

It belongs to the TRAFAC class YlqF/YawG GTPase family. RsgA subfamily. In terms of assembly, monomer. Associates with 30S ribosomal subunit, binds 16S rRNA. The cofactor is Zn(2+).

The protein resides in the cytoplasm. Its function is as follows. One of several proteins that assist in the late maturation steps of the functional core of the 30S ribosomal subunit. Helps release RbfA from mature subunits. May play a role in the assembly of ribosomal proteins into the subunit. Circularly permuted GTPase that catalyzes slow GTP hydrolysis, GTPase activity is stimulated by the 30S ribosomal subunit. The polypeptide is Small ribosomal subunit biogenesis GTPase RsgA (Streptococcus pneumoniae serotype 4 (strain ATCC BAA-334 / TIGR4)).